A 98-amino-acid polypeptide reads, in one-letter code: Large ribosomal subunit protein uL23 (98 aa).

The protein belongs to the universal ribosomal protein uL23 family. In terms of assembly, part of the 50S ribosomal subunit. Contacts protein L29, and trigger factor when it is bound to the ribosome.

In terms of biological role, one of the early assembly proteins it binds 23S rRNA. One of the proteins that surrounds the polypeptide exit tunnel on the outside of the ribosome. Forms the main docking site for trigger factor binding to the ribosome. The polypeptide is Large ribosomal subunit protein uL23 (Streptococcus equi subsp. equi (strain 4047)).